The primary structure comprises 347 residues: 4-hydroxy-2-oxovalerate aldolase 2 (347 aa).

The region spanning valine 7–alanine 259 is the Pyruvate carboxyltransferase domain. Arginine 15 to aspartate 16 contributes to the substrate binding site. Aspartate 16 is a binding site for Mn(2+). Histidine 19 (proton acceptor) is an active-site residue. The substrate site is built by serine 169 and histidine 198. Histidine 198 and histidine 200 together coordinate Mn(2+). Substrate is bound at residue tyrosine 289.

It belongs to the 4-hydroxy-2-oxovalerate aldolase family.

The enzyme catalyses (S)-4-hydroxy-2-oxopentanoate = acetaldehyde + pyruvate. The polypeptide is 4-hydroxy-2-oxovalerate aldolase 2 (Mycobacterium ulcerans (strain Agy99)).